The following is a 105-amino-acid chain: MSDSEYLTRAEAALAAIERALDDTDADIELERSGNVLTLEFENRSKIIVNLQPPMSEIWIAAKAGGFHFRFVDGEWRDTRSGTEFFAALSEYATQQAGEPVHFEA.

Belongs to the frataxin family.

In terms of biological role, involved in iron-sulfur (Fe-S) cluster assembly. May act as a regulator of Fe-S biogenesis. The polypeptide is Iron-sulfur cluster assembly protein CyaY (Paraburkholderia xenovorans (strain LB400)).